A 486-amino-acid polypeptide reads, in one-letter code: Cardiolipin synthase A (486 aa).

2 helical membrane passes run 3–23 (TFYTVVSWLVILGYWVLIAGV) and 38–58 (MAWLLIIYILPLVGIIAYLSV). PLD phosphodiesterase domains lie at 219 to 246 (MDLRQHRKMVMIDNYIAYTGSMNMVDPR) and 399 to 426 (EGGLLHTKSVLVDGELSLVGTVNLDMRS). Catalysis depends on residues His224, Lys226, Asp231, His404, Lys406, and Asp411.

It belongs to the phospholipase D family. Cardiolipin synthase subfamily. ClsA sub-subfamily.

The protein resides in the cell inner membrane. The catalysed reaction is 2 a 1,2-diacyl-sn-glycero-3-phospho-(1'-sn-glycerol) = a cardiolipin + glycerol. Functionally, catalyzes the reversible phosphatidyl group transfer from one phosphatidylglycerol molecule to another to form cardiolipin (CL) (diphosphatidylglycerol) and glycerol. The polypeptide is Cardiolipin synthase A (Salmonella paratyphi A (strain ATCC 9150 / SARB42)).